A 108-amino-acid polypeptide reads, in one-letter code: PTS system galactose-specific EIIB component (108 aa).

Residues 3–108 form the PTS EIIB type-3 domain; sequence DKVIALACAA…VLAAAENLMN (106 aa). Catalysis depends on cysteine 10, which acts as the Phosphocysteine intermediate. At cysteine 10 the chain carries Phosphocysteine; by EIIA.

The enzyme catalyses N(pros)-phospho-L-histidyl-[protein] + D-galactose(out) = D-galactose 6-phosphate(in) + L-histidyl-[protein]. Its function is as follows. The phosphoenolpyruvate-dependent sugar phosphotransferase system (sugar PTS), a major carbohydrate active transport system, catalyzes the phosphorylation of incoming sugar substrates concomitantly with their translocation across the cell membrane. Involved in galactose transport with PtcA and Lmg_0963. This chain is PTS system galactose-specific EIIB component, found in Lactococcus lactis subsp. cremoris (strain MG1363).